We begin with the raw amino-acid sequence, 557 residues long: Pre-mRNA-processing protein 45 (557 aa).

3 disordered regions span residues 1-32 (MALL…TSHA), 208-243 (EQDP…KVSA), and 316-444 (MAEK…MSSD). A compositionally biased stretch (acidic residues) spans 16-25 (DFDDEEEDYV). Positions 224–235 (RGPPSPPPPVLH) are enriched in pro residues. Phosphoserine occurs at positions 228 and 236. Residues 316–327 (MAEKEKQEKEQR) show a composition bias toward basic and acidic residues. At Ser-376 the chain carries Phosphoserine. Over residues 386-430 (EAFRRRQELRRERRRQAEKDLRLSRMGAEKRAKLAEKDRPRDVAE) the composition is skewed to basic and acidic residues.

It belongs to the SNW family. As to quaternary structure, homodimer. Interacts with cyp1 and the small 23 kDa subunit of the splicing factor U2AF (u2af23). Belongs to the 40S cdc5-associated complex (or cwf complex), a spliceosome sub-complex reminiscent of a late-stage spliceosome composed of the U2, U5 and U6 snRNAs and at least brr2, cdc5, cwf2/prp3, cwf3/syf1, cwf4/syf3, cwf5/ecm2, spp42/cwf6, cwf7/spf27, cwf8, cwf9, cwf10, cwf11, cwf12, prp45/cwf13, cwf14, cwf15, cwf16, cwf17, cwf18, cwf19, cwf20, cwf21, cwf22, cwf23, cwf24, cwf25, cwf26, cyp7/cwf27, cwf28, cwf29/ist3, lea1, msl1, prp5/cwf1, prp10, prp12/sap130, prp17, prp22, sap61, sap62, sap114, sap145, slu7, smb1, smd1, smd3, smf1, smg1 and syf2.

The protein localises to the nucleus. Functionally, involved in pre-mRNA splicing. This Schizosaccharomyces pombe (strain 972 / ATCC 24843) (Fission yeast) protein is Pre-mRNA-processing protein 45 (prp45).